The sequence spans 507 residues: E3 SUMO-protein ligase PIAS4 (507 aa).

Residue alanine 2 is modified to N-acetylalanine. Residue lysine 9 forms a Glycyl lysine isopeptide (Lys-Gly) (interchain with G-Cter in SUMO2) linkage. In terms of domain architecture, SAP spans valine 12–valine 46. The LXXLL motif motif lies at leucine 20–leucine 24. Residue lysine 35 forms a Glycyl lysine isopeptide (Lys-Gly) (interchain with G-Cter in SUMO); alternate linkage. Lysine 35 is covalently cross-linked (Glycyl lysine isopeptide (Lys-Gly) (interchain with G-Cter in SUMO2); alternate). Residues lysine 56, lysine 59, lysine 68, and lysine 69 each participate in a glycyl lysine isopeptide (Lys-Gly) (interchain with G-Cter in SUMO2) cross-link. At lysine 107 the chain carries N6-acetyllysine. The 161-residue stretch at leucine 112–leucine 272 folds into the PINIT domain. A Glycyl lysine isopeptide (Lys-Gly) (interchain with G-Cter in SUMO2) cross-link involves residue lysine 118. Residue lysine 128 forms a Glycyl lysine isopeptide (Lys-Gly) (interchain with G-Cter in SUMO) linkage. An SP-RING-type zinc finger spans residues proline 304–glycine 385. Cysteine 335, histidine 337, cysteine 358, and cysteine 361 together coordinate Zn(2+). Positions alanine 426 to cysteine 507 are disordered. The segment covering isoleucine 434 to alanine 450 has biased composition (gly residues). Over residues serine 474–glutamate 489 the composition is skewed to acidic residues.

This sequence belongs to the PIAS family. Interacts with AR, GATA2, LEF1, TP53 and STAT1 (IFNG-induced). Interacts with TICAM1. Interacts with MTA1. Interacts with PRDM1/Blimp-1. Interacts with TRIM32 upon treatment with UVB and TNF-alpha. As to quaternary structure, (Microbial infection) Interacts ewith Moloney murine leukemia virus Capsid protein p30. Post-translationally, sumoylated. Lys-35 is the main site of sumoylation. Sumoylation is required for TCF4 sumoylation and transcriptional activation. Represses LEF1 transcriptional activity. SUMO1 is the preferred conjugate. Ubiquitinated by TRIM32 upon treatment with UVB and TNF-alpha. Widely expressed, with highest levels in testis. Also expressed in vascular endothelial cells, in primary keratinocytes and in the CNS, including cortex, olfactory bulb, spinal cord, thalamus and trigeminal ganglion. Low expression, if any, in liver and lung.

Its subcellular location is the nucleus. The protein resides in the PML body. The enzyme catalyses S-ubiquitinyl-[E2 ubiquitin-conjugating enzyme]-L-cysteine + [acceptor protein]-L-lysine = [E2 ubiquitin-conjugating enzyme]-L-cysteine + N(6)-ubiquitinyl-[acceptor protein]-L-lysine.. The protein operates within protein modification; protein sumoylation. In terms of biological role, functions as an E3-type small ubiquitin-like modifier (SUMO) ligase, stabilizing the interaction between UBE2I and the substrate, and as a SUMO-tethering factor. Mediates sumoylation of ALKBH5, AXIN1, CEBPA, KLF8, GATA2, PARK7, HERC2, MYB, TCF4 and RNF168. Plays a crucial role as a transcriptional coregulation in various cellular pathways, including the STAT pathway, the p53/TP53 pathway, the Wnt pathway and the steroid hormone signaling pathway. Involved in gene silencing. In Wnt signaling, represses LEF1 and enhances TCF4 transcriptional activities through promoting their sumoylations. Enhances the sumoylation of MTA1 and may participate in its paralog-selective sumoylation. Binds to AT-rich DNA sequences, known as matrix or scaffold attachment regions (MARs/SARs). Catalyzes conjugation of SUMO2 to KAT5 in response to DNA damage, facilitating repair of DNA double-strand breaks (DSBs) via homologous recombination (HR). Mediates sumoylation of PARP1 in response to PARP1 trapping to chromatin. Mediates sumoylation of KLF8, repressiing KLF8 transcriptional activity and cell cycle progression into G(1) phase. Sumoylates ALKBH5 downstream of MAPK8/JNK1 and MAPK9/JNK2 in response to reactive oxygen species (ROS), inhibiting ALKBH5 RNA demethylase activity. The sequence is that of E3 SUMO-protein ligase PIAS4 (Pias4) from Mus musculus (Mouse).